Consider the following 217-residue polypeptide: Adenylate kinase (217 aa).

10-15 lines the ATP pocket; it reads GAGKGT. The interval 30–59 is NMP; that stretch reads STGDMFREAVAAGTELGVKVQNILSSGALV. AMP-binding positions include Thr31, Arg36, 57 to 59, 85 to 88, and Gln92; these read ALV and GYPR. The segment at 126–163 is LID; sequence SRRICPKCGKIYNLISMPPVSDQICDDCGEQLVIREDD. Arg127 contributes to the ATP binding site. Residues Cys130 and Cys133 each contribute to the Zn(2+) site. ATP is bound at residue 136–137; sequence IY. Zn(2+) contacts are provided by Cys150 and Cys153. 2 residues coordinate AMP: Arg160 and Arg171. Residue Arg199 participates in ATP binding.

The protein belongs to the adenylate kinase family. As to quaternary structure, monomer.

The protein resides in the cytoplasm. The enzyme catalyses AMP + ATP = 2 ADP. It participates in purine metabolism; AMP biosynthesis via salvage pathway; AMP from ADP: step 1/1. Functionally, catalyzes the reversible transfer of the terminal phosphate group between ATP and AMP. Plays an important role in cellular energy homeostasis and in adenine nucleotide metabolism. In Pseudothermotoga lettingae (strain ATCC BAA-301 / DSM 14385 / NBRC 107922 / TMO) (Thermotoga lettingae), this protein is Adenylate kinase.